Here is a 292-residue protein sequence, read N- to C-terminus: UTP--glucose-1-phosphate uridylyltransferase (292 aa).

It belongs to the UDPGP type 2 family. Interacts with FloT.

The protein resides in the cell membrane. It localises to the membrane raft. It carries out the reaction alpha-D-glucose 1-phosphate + UTP + H(+) = UDP-alpha-D-glucose + diphosphate. The protein operates within glycolipid metabolism; diglucosyl-diacylglycerol biosynthesis. Functionally, catalyzes the formation of UDP-glucose from glucose-1-phosphate and UTP. This is an intermediate step in the biosynthesis of diglucosyl-diacylglycerol (Glc2-DAG), i.e. the predominant glycolipid found in B.subtilis membrane, which is also used as a membrane anchor for lipoteichoic acid (LTA). Has a role in the biosynthesis of all phosphate-containing envelope polymers, since UDP-glucose serves as a glucosyl donor not only for the biosynthesis of LTA but also for wall teichoic acids (WTAs). Is required for biofilm formation. This is likely due to another role of UDP-glucose, which might also act as a metabolic signal regulating biofilm formation or may be involved in some unknown biosynthetic pathway essential for biofilm formation, e.g. the synthesis of an exopolysaccharide. This chain is UTP--glucose-1-phosphate uridylyltransferase (gtaB), found in Bacillus subtilis (strain 168).